Here is a 782-residue protein sequence, read N- to C-terminus: LINE-1 type transposase domain-containing protein 1 (782 aa).

Disordered stretches follow at residues 1-30 (MSGVQSKAARLQKERKEKLSADRERKTATS), 90-200 (QEGD…GGAG), and 338-397 (NKGT…SAEE). Composition is skewed to basic and acidic residues over residues 11–27 (LQKERKEKLSADRERKT) and 95–107 (ISERPKPGEKVEE). Ser-136 is subject to Phosphoserine. 2 stretches are compositionally biased toward basic and acidic residues: residues 143-158 (SLERGGEALRGEHGRC) and 183-194 (EENRLKAPKESP). The span at 347–396 (GEEEEISETQGEETSEGETSELGEEEGSESEEEEESSESEEEEESSESAE) shows a compositional bias: acidic residues. A phosphoserine mark is found at Ser-407, Ser-409, Ser-442, Ser-478, Ser-490, Ser-559, and Ser-567.

The protein belongs to the transposase 22 family.

The polypeptide is LINE-1 type transposase domain-containing protein 1 (L1td1) (Mus musculus (Mouse)).